The primary structure comprises 245 residues: Probable membrane transporter protein YdhB (245 aa).

Transmembrane regions (helical) follow at residues 1–21, 34–56, 71–91, 98–118, 137–157, 177–197, 199–219, and 225–245; these read MLIILVMFLLGIILGFIGAGG, HIPIHTALGTSLAGMAFTSLSGA, LIVGGFAAVGSFFGAKLTSFI, YLTAGMLFLSAILILIRLFIL, ILGIAAGVLSGTFGIGSAPFI, MLVIIPLAVGGGIGYITEGFV, YVLLVKVLVGTMCGAYVGAKF, and KVVLKSAIFLTPAIAGLLLLF.

This sequence belongs to the 4-toluene sulfonate uptake permease (TSUP) (TC 2.A.102) family.

Its subcellular location is the cell membrane. In Bacillus subtilis (strain 168), this protein is Probable membrane transporter protein YdhB (ydhB).